Reading from the N-terminus, the 406-residue chain is tRNA-specific 2-thiouridylase MnmA (406 aa).

Residues 6–13 (AMSGGVDS) and leucine 32 each bind ATP. Cysteine 101 functions as the Nucleophile in the catalytic mechanism. A disulfide bridge connects residues cysteine 101 and cysteine 193. Residue glycine 125 coordinates ATP. The interval 143–145 (KDQ) is interaction with tRNA. Cysteine 193 serves as the catalytic Cysteine persulfide intermediate. The tract at residues 378–406 (GAPIEEQPAPGTVGAVDADAIEQGEDAQR) is disordered. Positions 396–406 (DAIEQGEDAQR) are enriched in acidic residues.

This sequence belongs to the MnmA/TRMU family.

Its subcellular location is the cytoplasm. The catalysed reaction is S-sulfanyl-L-cysteinyl-[protein] + uridine(34) in tRNA + AH2 + ATP = 2-thiouridine(34) in tRNA + L-cysteinyl-[protein] + A + AMP + diphosphate + H(+). Its function is as follows. Catalyzes the 2-thiolation of uridine at the wobble position (U34) of tRNA, leading to the formation of s(2)U34. This chain is tRNA-specific 2-thiouridylase MnmA, found in Corynebacterium urealyticum (strain ATCC 43042 / DSM 7109).